Consider the following 435-residue polypeptide: 26S proteasome regulatory subunit 7 (435 aa).

Positions 1–23 are enriched in basic and acidic residues; that stretch reads MPDHLGDDMRKTKKDDTKEEEKN. Positions 1–24 are disordered; it reads MPDHLGDDMRKTKKDDTKEEEKNF. ATP is bound at residue 218 to 225; sequence GPPGTGKT.

The protein belongs to the AAA ATPase family.

It is found in the cytoplasm. The protein resides in the nucleus. In terms of biological role, the 26S proteasome is involved in the ATP-dependent degradation of ubiquitinated proteins. The regulatory (or ATPase) complex confers ATP dependency and substrate specificity to the 26S complex. The polypeptide is 26S proteasome regulatory subunit 7 (rpt-1) (Caenorhabditis elegans).